We begin with the raw amino-acid sequence, 256 residues long: Peroxisomal membrane protein PMP30B (256 aa).

This sequence belongs to the peroxin-11 family.

It is found in the peroxisome membrane. Its function is as follows. Involved in peroxisomal proliferation. Could participate in peroxisomal elongation or fission. May be involved in parceling of peroxisomes into regular quanta. This is Peroxisomal membrane protein PMP30B (PEX11B) from Candida boidinii (Yeast).